The chain runs to 115 residues: Large ribosomal subunit protein bL20 (115 aa).

It belongs to the bacterial ribosomal protein bL20 family.

Functionally, binds directly to 23S ribosomal RNA and is necessary for the in vitro assembly process of the 50S ribosomal subunit. It is not involved in the protein synthesizing functions of that subunit. This Prochlorococcus marinus (strain MIT 9301) protein is Large ribosomal subunit protein bL20.